The following is a 313-amino-acid chain: MTNKVYLLTDEQSKKIEHVLPTSDTTNLPQGTKYRTKISGHTVTLYNSNKLMIQGADSEVIGEQILSKAGIQLTQQLPDSNSTSKHNVSIESIQYDNYNCIGSDEAGSGDYFGPMTVVASYVSKKNAEILKVLGVMDSKNLKDRQIIELAEQIIPIIPHSLLVLDNIKYNERKQMGWSQVKMKAVLHNEAIKNVLNKIEEPVDYIVIDQFAVQGVYENYALGAIPERNKTKFETKGESKAIAIAASSIIARYAFVKHFEQIIKETGISITKGAGAKVDVEAAKIIKLRGIDYLDTITKKDFKNREKALKLIKK.

The RNase H type-2 domain occupies 98–313 (YNCIGSDEAG…REKALKLIKK (216 aa)). Residues Asp-104, Glu-105, and Asp-208 each coordinate a divalent metal cation.

The protein belongs to the RNase HII family. RnhC subfamily. Requires Mn(2+) as cofactor. It depends on Mg(2+) as a cofactor.

It localises to the cytoplasm. The enzyme catalyses Endonucleolytic cleavage to 5'-phosphomonoester.. Functionally, endonuclease that specifically degrades the RNA of RNA-DNA hybrids. The chain is Ribonuclease HIII from Macrococcus caseolyticus (strain JCSC5402) (Macrococcoides caseolyticum).